A 313-amino-acid polypeptide reads, in one-letter code: MSSESDKKLEIRLASPRGFCAGVERAIETVKLALKEHGEPVYVLHEIVHNRHVIDNLRQGGAVFVEELEQIPAGAICIFSAHGVSLQIEKRAKALGLKTIDATCPLVSSVHRMVEKYHAEGCSVVIIGHHRHPEVEGTAGRVTGEVYVVATAAEAEKLQVNNSEKIAFVTQTTLAENDIEQVLVVLRRRFPLLQGPKSNICFATQNRQNAVRTLARCTDLILVVGSKNSSNSNRLREVGTETGTPAYLIDDFKDLKESWFRGCERVGITAGASAPESLVEGVVVWLLKRGRYEITEMTGQQEKVHFKAASLID.

[4Fe-4S] cluster is bound at residue Cys20. (2E)-4-hydroxy-3-methylbut-2-enyl diphosphate is bound by residues His49 and His82. Positions 49 and 82 each coordinate dimethylallyl diphosphate. Isopentenyl diphosphate contacts are provided by His49 and His82. Cys104 contacts [4Fe-4S] cluster. Residue His132 participates in (2E)-4-hydroxy-3-methylbut-2-enyl diphosphate binding. His132 contacts dimethylallyl diphosphate. His132 provides a ligand contact to isopentenyl diphosphate. Catalysis depends on Glu134, which acts as the Proton donor. (2E)-4-hydroxy-3-methylbut-2-enyl diphosphate is bound at residue Thr172. Cys201 lines the [4Fe-4S] cluster pocket. Positions 229, 230, 231, and 273 each coordinate (2E)-4-hydroxy-3-methylbut-2-enyl diphosphate. Residues Ser229, Ser230, Asn231, and Ser273 each coordinate dimethylallyl diphosphate. Isopentenyl diphosphate contacts are provided by Ser229, Ser230, Asn231, and Ser273.

The protein belongs to the IspH family. The cofactor is [4Fe-4S] cluster.

The catalysed reaction is isopentenyl diphosphate + 2 oxidized [2Fe-2S]-[ferredoxin] + H2O = (2E)-4-hydroxy-3-methylbut-2-enyl diphosphate + 2 reduced [2Fe-2S]-[ferredoxin] + 2 H(+). The enzyme catalyses dimethylallyl diphosphate + 2 oxidized [2Fe-2S]-[ferredoxin] + H2O = (2E)-4-hydroxy-3-methylbut-2-enyl diphosphate + 2 reduced [2Fe-2S]-[ferredoxin] + 2 H(+). It functions in the pathway isoprenoid biosynthesis; dimethylallyl diphosphate biosynthesis; dimethylallyl diphosphate from (2E)-4-hydroxy-3-methylbutenyl diphosphate: step 1/1. It participates in isoprenoid biosynthesis; isopentenyl diphosphate biosynthesis via DXP pathway; isopentenyl diphosphate from 1-deoxy-D-xylulose 5-phosphate: step 6/6. Functionally, catalyzes the conversion of 1-hydroxy-2-methyl-2-(E)-butenyl 4-diphosphate (HMBPP) into a mixture of isopentenyl diphosphate (IPP) and dimethylallyl diphosphate (DMAPP). Acts in the terminal step of the DOXP/MEP pathway for isoprenoid precursor biosynthesis. In Desulfotalea psychrophila (strain LSv54 / DSM 12343), this protein is 4-hydroxy-3-methylbut-2-enyl diphosphate reductase.